Here is a 319-residue protein sequence, read N- to C-terminus: Taste receptor type 2 member 30 (319 aa).

Met-1 is a topological domain (extracellular). A helical transmembrane segment spans residues 2–22; the sequence is ITFLPIIFSILIVVIFVIGNF. At 23-46 the chain is on the cytoplasmic side; that stretch reads ANGFIALVNSIEWVKRQKISFVDQ. A helical transmembrane segment spans residues 47-67; sequence ILTALAVSRVGLLWVLLLHWY. At 68-86 the chain is on the extracellular side; sequence ATQLNPAFYSVEVRITVYN. Residues 87-107 form a helical membrane-spanning segment; it reads VWAVTNHFSSWLATSLSMFYL. Residues 108–126 lie on the Cytoplasmic side of the membrane; the sequence is LKIANFSNLIFLRIKRRVK. The helical transmembrane segment at 127-147 threads the bilayer; sequence SVVLVILLGPLLFLVCHLFVI. At 148-178 the chain is on the extracellular side; it reads NMDETIWTKEYEGNMTWKIKLRSAMYHSNMT. N-linked (GlcNAc...) asparagine glycosylation is found at Asn-161 and Asn-176. The helical transmembrane segment at 179–199 threads the bilayer; it reads LTMLANFVPLTLTLISFLLLI. The Cytoplasmic portion of the chain corresponds to 200 to 229; sequence CSLCKHLKKMQLHGKGSQDPSTKVHIKALQ. Residues 230–250 traverse the membrane as a helical segment; the sequence is TVTSFLLLCAIYFLSMIISVC. The Extracellular segment spans residues 251 to 259; it reads NLGRLEKQP. A helical transmembrane segment spans residues 260 to 280; it reads VFMFCQAIIFSYPSTHPFILI. The Cytoplasmic segment spans residues 281-319; sequence LGNKKLKQIFLSVLWHVRYWVKDRSLRLHRFTRAALCKG.

Belongs to the G-protein coupled receptor T2R family.

The protein localises to the membrane. In terms of biological role, receptor that may play a role in the perception of bitterness and is gustducin-linked. May play a role in sensing the chemical composition of the gastrointestinal content. The activity of this receptor may stimulate alpha gustducin, mediate PLC-beta-2 activation and lead to the gating of TRPM5. This is Taste receptor type 2 member 30 (TAS2R30) from Pan troglodytes (Chimpanzee).